A 237-amino-acid polypeptide reads, in one-letter code: MSTVVSEGRNGGNERYSPQDDVSKELPDINGLSLEETMGIPSFDRLPSPTPRYFGSCKWFNVSKGYGFVIDDNTGEDLFVHQSNLNMQGFRSLDEGERVSYYIQERSNGKGKEAYAVSGEVEGQGLKGSRIHPLGRKKAVSLRCFRCGKFATHKAKGCPNVKTDAKVCYTCGSEEHVSSVCPERRRKHRPEQVAAEEAEAARLAQEEADRSSPEENERKDGKLVEQKETETADKAGK.

The tract at residues 1–26 is disordered; the sequence is MSTVVSEGRNGGNERYSPQDDVSKEL. Over residues 17 to 26 the composition is skewed to basic and acidic residues; sequence SPQDDVSKEL. Residues 52-120 enclose the CSD domain; the sequence is RYFGSCKWFN…GKEAYAVSGE (69 aa). 2 consecutive CCHC-type zinc fingers follow at residues 143–160 and 166–183; these read RCFR…GCPN and KVCY…VCPE. Residues Cys144, Cys147, His153, Cys158, Cys168, Cys171, His176, and Cys181 each coordinate Zn(2+). The disordered stretch occupies residues 180–237; that stretch reads VCPERRRKHRPEQVAAEEAEAARLAQEEADRSSPEENERKDGKLVEQKETETADKAGK. Positions 204–237 are enriched in basic and acidic residues; that stretch reads AQEEADRSSPEENERKDGKLVEQKETETADKAGK.

The protein belongs to the lin-28 family. As to quaternary structure, component of a complex at least containing lep-2, lin-28 and the long non-coding RNA lep-5, which mediates the degradation of lin-28.

Its subcellular location is the cytoplasm. Functionally, heterochronic protein which controls the choice of stage specific cell fates. Regulates the timing of the second larval stage events (L2 events) in the hypodermis. May negatively regulate the larval to adult transition via the suppression of the microRNA (miRNA) let-7 during L3. Through this regulatory role, controls the timing of the sexual maturation of the nervous system. Plays a role in governing the developmental timing of male tail tip morphogenesis. Plays a role in the control of seam cell number and vulval development. This Caenorhabditis briggsae protein is Protein lin-28 (lin-28).